The chain runs to 419 residues: L-rhamnose isomerase (419 aa).

Residues histidine 262, aspartate 294, and aspartate 296 each coordinate Mn(2+).

Belongs to the rhamnose isomerase family. Homotetramer. The cofactor is Mn(2+).

Its subcellular location is the cytoplasm. It carries out the reaction L-rhamnopyranose = L-rhamnulose. It participates in carbohydrate degradation; L-rhamnose degradation; glycerone phosphate from L-rhamnose: step 1/3. Functionally, catalyzes the interconversion of L-rhamnose and L-rhamnulose. The chain is L-rhamnose isomerase from Escherichia coli O81 (strain ED1a).